The primary structure comprises 512 residues: Spastin homolog (512 aa).

Residues 1 to 274 lie on the Cytoplasmic side of the membrane; sequence MFAFSKGPAG…FKGLRQPVKG (274 aa). A coiled-coil region spans residues 32–97; that stretch reads IEMDELTKHA…MKLEKSAQDR (66 aa). Residues 110–182 are disordered; that stretch reads KQSRSATVGP…SDTVHPEPPV (73 aa). The interval 115 to 233 is MTBD; that stretch reads ATVGPSRPAS…ERLLDEVLDN (119 aa). Residues 137–163 are compositionally biased toward basic and acidic residues; sequence APEKKNAAKAKENDENRHVCSRGDRCG. Residues 275 to 294 constitute an intramembrane region (helical); the sequence is ILLFGPPGNGKTLLAKAVAG. Position 279–286 (279–286) interacts with ATP; the sequence is GPPGNGKT. The Cytoplasmic portion of the chain corresponds to 295-512; that stretch reads ESKQMFFNIS…LSDFSRSFGC (218 aa).

Belongs to the AAA ATPase family. Spastin subfamily. As to quaternary structure, homohexamer. The homohexamer is stabilized by ATP-binding. The homohexamer may adopt a ring conformation through which microtubules pass prior to being severed. Interacts with microtubules. Interacts (via N-terminus) with tubulin; the interaction is direct.

Its subcellular location is the membrane. It localises to the cytoplasm. The protein resides in the cytoskeleton. It is found in the perinuclear region. The enzyme catalyses n ATP + n H2O + a microtubule = n ADP + n phosphate + (n+1) alpha/beta tubulin heterodimers.. Its function is as follows. ATP-dependent microtubule severing protein that specifically recognizes and cuts microtubules. Probably by regulating microtubule remodeling, plays a role in new synapse formation in GABAergic DD (Dorsal D type) neurons. In Caenorhabditis elegans, this protein is Spastin homolog.